A 168-amino-acid polypeptide reads, in one-letter code: Large ribosomal subunit protein uL10 (168 aa).

It belongs to the universal ribosomal protein uL10 family. Part of the ribosomal stalk of the 50S ribosomal subunit. The N-terminus interacts with L11 and the large rRNA to form the base of the stalk. The C-terminus forms an elongated spine to which L12 dimers bind in a sequential fashion forming a multimeric L10(L12)X complex.

Its function is as follows. Forms part of the ribosomal stalk, playing a central role in the interaction of the ribosome with GTP-bound translation factors. This Ralstonia pickettii (strain 12J) protein is Large ribosomal subunit protein uL10.